The sequence spans 331 residues: Hyaluronidase B (331 aa).

2 disulfide bridges follow: Cys19/Cys308 and Cys185/Cys197. Residue Asn79 is glycosylated (N-linked (GlcNAc...) asparagine). Glu109 functions as the Proton donor in the catalytic mechanism.

It belongs to the glycosyl hydrolase 56 family. As to expression, expressed by the venom gland.

The protein localises to the secreted. The catalysed reaction is Random hydrolysis of (1-&gt;4)-linkages between N-acetyl-beta-D-glucosamine and D-glucuronate residues in hyaluronate.. Its function is as follows. Hydrolyzes high molecular weight hyaluronic acid to produce small oligosaccharides. The chain is Hyaluronidase B from Vespa velutina (Asian yellow-legged hornet).